The following is a 363-amino-acid chain: Nicotinamide adenine dinucleotide transporter 2, mitochondrial (363 aa).

3 Solcar repeats span residues 15–107 (REVA…LKDV), 115–203 (LSIG…IKQY), and 215–305 (LSPG…MLRF). Helical transmembrane passes span 21-41 (AGAG…LDVI), 82-102 (GLSP…SVYG), 121-141 (MIAA…LWVV), 176-196 (LYSG…QFPA), 215-235 (LSPG…SILT), and 277-299 (LYRG…FTTY). The disordered stretch occupies residues 313-363 (ETNRSDDRRREEERKNLVSRRGEEEDKDLGLRESQTQSNKISTPHIPLGSK). The span at 315–343 (NRSDDRRREEERKNLVSRRGEEEDKDLGL) shows a compositional bias: basic and acidic residues. The segment covering 345–354 (ESQTQSNKIS) has biased composition (polar residues).

It belongs to the mitochondrial carrier (TC 2.A.29) family. As to expression, highly expressed in young meristematic shoot area, vascular bundles of leaves, developing siliques including the funiculi, petal veins, developing pollen and central cylinder of roots.

It localises to the mitochondrion membrane. Inhibited by pyridoxal 5'-phosphate, bathophenanthroline, tannic acid, mersalyl, mercuric chloride, p-hydroxymercuribenzoate, p-hydroxymercuribenzoate sulfonate, bromocresol purple and N-ethylmaleimide. Its function is as follows. Mediates the NAD(+) import into chloroplast. Favors the NAD(+)(in)/ADP or AMP(out) antiport exchange, but is also able to catalyze a low unidirectional transport (uniport) of NAD(+). Transports NAD(+), nicotinic acid adenine dinucleotide, nicotinamide mononucleotide, nicotinic acid mononucleotide, FAD, FMN, TTP, TDP, TMP, UTP, UDP, UMP, CTP, CDP, CMP, GTP, GDP, GMP, 3'-AMP, ATP, ADP and AMP, has low transport activity with cAMP, NADH and alpha-NAD(+), and has no activity with NADP(+), NADPH, nicotinamide, nicotinic acid, adenosine, thiamine mono- or diphosphate, inorganic phosphate, CoA, folate, NaCl, malate, malonate, citrate, fumarate, aspartate, glutamate, S-adenosylmethionine, lysine, arginine, and ornithine. In Arabidopsis thaliana (Mouse-ear cress), this protein is Nicotinamide adenine dinucleotide transporter 2, mitochondrial (NDT2).